A 245-amino-acid polypeptide reads, in one-letter code: OCIA domain-containing protein 1 (245 aa).

One can recognise an OCIA domain in the interval 1 to 112 (MNGRADFREP…KKLENSPLGE (112 aa)). A phosphoserine mark is found at S108, S116, S123, and S191. Disordered stretches follow at residues 111–141 (GEALRSGQARRSSPPGHYYQKSKYDSSVSGQ) and 169–245 (NESA…TWDE). Basic and acidic residues-rich tracts occupy residues 190-210 (ESPKRKNITYEELRNKNRESY) and 224-238 (PMHERVPKKEVKVNK).

This sequence belongs to the OCIAD1 family. Interacts with OCIAD2. Interacts with STAT3. As to expression, isoform 1 is highly expressed in many tissues, including testis, brain, placenta, ovary, prostate and mammary gland. Isoform 2 expression is restricted to the central nervous system including brain, cerebellum and spinal cord.

It is found in the endosome. Maintains stem cell potency. Increases STAT3 phosphorylation and controls ERK phosphorylation. May act as a scaffold, increasing STAT3 recruitment onto endosomes. Involved in integrin-mediated cancer cell adhesion and colony formation in ovarian cancer. In Homo sapiens (Human), this protein is OCIA domain-containing protein 1.